The chain runs to 242 residues: Myogenic factor 6 (242 aa).

Residues 31–63 (SPLYPGSDGTLSPCQDQMPPEAGSDSSGEEHVL) are disordered. In terms of domain architecture, bHLH spans 93–144 (DRRKAATLRERRRLKKINEAFEALKRRTVANPNQRLPKVEILRSAISYIERL).

As to quaternary structure, efficient DNA binding requires dimerization with another bHLH protein. Interacts with CSRP3. In terms of tissue distribution, skeletal muscle.

Its subcellular location is the nucleus. Its function is as follows. Involved in muscle differentiation (myogenic factor). Induces fibroblasts to differentiate into myoblasts. Probable sequence specific DNA-binding protein. The polypeptide is Myogenic factor 6 (MYF6) (Homo sapiens (Human)).